A 334-amino-acid chain; its full sequence is Tetratricopeptide repeat protein 24 (334 aa).

4 TPR repeats span residues 35–68, 72–105, 112–145, and 152–185; these read GPFYNDLGMGYFQLQLFPLAVEAFLQALPLCRQP, ATVLQNLGMTHNVLGNYWEAQEFHQKAASLHGSV, GRSFSGLAFSLSQLGDHRAAWDSYLHALQAAQDT, and WQACEGLGAAAARLGQHDQALKYYKEALALCQHE. The tract at residues 220-258 is disordered; that stretch reads PGKLQTSRKAKTSARVQSSAEDAQESQWEGEASEGGHEK. The segment covering 233-246 has biased composition (polar residues); it reads ARVQSSAEDAQESQ.

The sequence is that of Tetratricopeptide repeat protein 24 (Ttc24) from Mus musculus (Mouse).